Consider the following 490-residue polypeptide: Protein nucleotidyltransferase YdiU (490 aa).

Residues Gly-94, Gly-96, Arg-97, Lys-117, Asp-129, Gly-130, Arg-180, and Arg-187 each coordinate ATP. Residue Asp-256 is the Proton acceptor of the active site. The Mg(2+) site is built by Asn-257 and Asp-266. Residue Asp-266 participates in ATP binding.

This sequence belongs to the SELO family. Requires Mg(2+) as cofactor. Mn(2+) serves as cofactor.

It carries out the reaction L-seryl-[protein] + ATP = 3-O-(5'-adenylyl)-L-seryl-[protein] + diphosphate. The enzyme catalyses L-threonyl-[protein] + ATP = 3-O-(5'-adenylyl)-L-threonyl-[protein] + diphosphate. The catalysed reaction is L-tyrosyl-[protein] + ATP = O-(5'-adenylyl)-L-tyrosyl-[protein] + diphosphate. It catalyses the reaction L-histidyl-[protein] + UTP = N(tele)-(5'-uridylyl)-L-histidyl-[protein] + diphosphate. It carries out the reaction L-seryl-[protein] + UTP = O-(5'-uridylyl)-L-seryl-[protein] + diphosphate. The enzyme catalyses L-tyrosyl-[protein] + UTP = O-(5'-uridylyl)-L-tyrosyl-[protein] + diphosphate. Its function is as follows. Nucleotidyltransferase involved in the post-translational modification of proteins. It can catalyze the addition of adenosine monophosphate (AMP) or uridine monophosphate (UMP) to a protein, resulting in modifications known as AMPylation and UMPylation. This is Protein nucleotidyltransferase YdiU from Clostridium perfringens (strain SM101 / Type A).